The sequence spans 312 residues: Protoheme IX farnesyltransferase (312 aa).

The next 9 helical transmembrane spans lie at 31–51, 58–78, 107–127, 130–150, 157–177, 184–204, 229–249, 250–270, and 286–306; these read LLMK…GLFI, PLLS…AGAI, TALT…AICV, ISSI…TMWL, NIVI…SAVT, CLML…TLSL, YSIL…YFTD, IAGL…LCYA, and FKYS…EHCI.

It belongs to the UbiA prenyltransferase family. Protoheme IX farnesyltransferase subfamily.

Its subcellular location is the cell inner membrane. It carries out the reaction heme b + (2E,6E)-farnesyl diphosphate + H2O = Fe(II)-heme o + diphosphate. The protein operates within porphyrin-containing compound metabolism; heme O biosynthesis; heme O from protoheme: step 1/1. Functionally, converts heme B (protoheme IX) to heme O by substitution of the vinyl group on carbon 2 of heme B porphyrin ring with a hydroxyethyl farnesyl side group. The chain is Protoheme IX farnesyltransferase from Orientia tsutsugamushi (strain Ikeda) (Rickettsia tsutsugamushi).